Reading from the N-terminus, the 191-residue chain is UPF0149 protein plu3602 (191 aa).

It belongs to the UPF0149 family.

The sequence is that of UPF0149 protein plu3602 from Photorhabdus laumondii subsp. laumondii (strain DSM 15139 / CIP 105565 / TT01) (Photorhabdus luminescens subsp. laumondii).